A 373-amino-acid chain; its full sequence is P2Y purinoceptor 1 (373 aa).

The Extracellular segment spans residues 1 to 51 (MTEVLWPAVPNGTDTAFLADPGSPWGNSTVTSTAAVASPFKCALTKTGFQF). Asn-11 and Asn-27 each carry an N-linked (GlcNAc...) asparagine glycan. 2 disulfide bridges follow: Cys-42/Cys-296 and Cys-124/Cys-202. Lys-46 provides a ligand contact to ADP. A helical membrane pass occupies residues 52-74 (YYLPAVYILVFIIGFLGNSVAIW). Residues 75–87 (MFVFHMKPWSGIS) are Cytoplasmic-facing. The chain crosses the membrane as a helical span at residues 88 to 109 (VYMFNLALADFLYVLTLPALIF). Residues 110–125 (YYFNKTDWIFGDAMCK) lie on the Extracellular side of the membrane. A glycan (N-linked (GlcNAc...) asparagine) is linked at Asn-113. A helical transmembrane segment spans residues 126–147 (LQRFIFHVNLYGSILFLTCISA). The Cytoplasmic portion of the chain corresponds to 148–166 (HRYSGVVYPLKSLGRLKKK). The helical transmembrane segment at 167–188 (NAVYISVLVWLIVVVGISPILF) threads the bilayer. Residues 189–214 (YSGTGIRKNKTITCYDTTSDEYLRSY) are Extracellular-facing. Residue Asn-197 is glycosylated (N-linked (GlcNAc...) asparagine). 203–205 (YDT) provides a ligand contact to ADP. A helical transmembrane segment spans residues 215–237 (FIYSMCTTVAMFCVPLVLILGCY). Residues 238 to 260 (GLIVRALIYKDLDNSPLRRKSIY) are Cytoplasmic-facing. Residues 261–284 (LVIIVLTVFAVSYIPFHVMKTMNL) form a helical membrane-spanning segment. Residues 283 to 287 (NLRAR), 303 to 306 (YATY), and Arg-310 each bind ADP. At 285 to 303 (RARLDFQTPEMCAFNDRVY) the chain is on the extracellular side. A helical transmembrane segment spans residues 304 to 325 (ATYQVTRGLASLNSCVDPILYF). Residues 326–373 (LAGDTFRRRLSRATRKASRRSEANLQSKSEDMTLNILSEFKQNGDTSL) lie on the Cytoplasmic side of the membrane.

The protein belongs to the G-protein coupled receptor 1 family.

It localises to the cell membrane. In terms of biological role, receptor for extracellular adenine nucleotides such as ADP. In platelets, binding to ADP leads to mobilization of intracellular calcium ions via activation of phospholipase C, a change in platelet shape, and ultimately platelet aggregation. The sequence is that of P2Y purinoceptor 1 (P2RY1) from Bos taurus (Bovine).